The following is a 241-amino-acid chain: Glucosamine-6-phosphate deaminase (241 aa).

Aspartate 67 (proton acceptor; for enolization step) is an active-site residue. Catalysis depends on asparagine 136, which acts as the For ring-opening step. Residue histidine 138 is the Proton acceptor; for ring-opening step of the active site. Glutamate 143 serves as the catalytic For ring-opening step.

It belongs to the glucosamine/galactosamine-6-phosphate isomerase family. NagB subfamily.

It catalyses the reaction alpha-D-glucosamine 6-phosphate + H2O = beta-D-fructose 6-phosphate + NH4(+). The protein operates within amino-sugar metabolism; N-acetylneuraminate degradation; D-fructose 6-phosphate from N-acetylneuraminate: step 5/5. Functionally, catalyzes the reversible isomerization-deamination of glucosamine 6-phosphate (GlcN6P) to form fructose 6-phosphate (Fru6P) and ammonium ion. In Clostridium tetani (strain Massachusetts / E88), this protein is Glucosamine-6-phosphate deaminase.